We begin with the raw amino-acid sequence, 191 residues long: Small ribosomal subunit protein uS9c (191 aa).

The disordered stretch occupies residues 166–191 (TQDSRVKERRKYGLKKARKASQYHKR). Residues 172–191 (KERRKYGLKKARKASQYHKR) show a composition bias toward basic residues.

The protein belongs to the universal ribosomal protein uS9 family.

The protein localises to the plastid. Its subcellular location is the chloroplast. The chain is Small ribosomal subunit protein uS9c (rps9) from Chlamydomonas reinhardtii (Chlamydomonas smithii).